A 151-amino-acid polypeptide reads, in one-letter code: Protein SprT-like (151 aa).

The SprT-like domain occupies 6 to 148 (LQALVERISL…FCRGKLKKIK (143 aa)). A Zn(2+)-binding site is contributed by histidine 67. Glutamate 68 is a catalytic residue. Histidine 71 is a Zn(2+) binding site.

The protein belongs to the SprT family. The cofactor is Zn(2+).

It is found in the cytoplasm. The chain is Protein SprT-like from Anoxybacillus flavithermus (strain DSM 21510 / WK1).